The following is a 515-amino-acid chain: Chromosomal replication initiator protein DnaA (515 aa).

A domain I, interacts with DnaA modulators region spans residues 1-89 (MVADQAVLSS…LLAISIDANL (89 aa)). The tract at residues 89-172 (LQPPRTPSSE…APPSTSAETS (84 aa)) is domain II. Disordered regions lie at residues 90–130 (QPPR…SRRA) and 142–171 (PPAD…SAET). 2 stretches are compositionally biased toward low complexity: residues 102-114 (SSLA…AAAP) and 143-160 (PADV…NGKP). Positions 173-389 (RLNDRYHFET…GALIRVTAFA (217 aa)) are domain III, AAA+ region. ATP is bound by residues Gly-217, Gly-219, Lys-220, and Thr-221. The interval 390–515 (SLNRQTVDIE…NEIKRKQRGA (126 aa)) is domain IV, binds dsDNA.

The protein belongs to the DnaA family. In terms of assembly, oligomerizes as a right-handed, spiral filament on DNA at oriC.

The protein resides in the cytoplasm. Plays an essential role in the initiation and regulation of chromosomal replication. ATP-DnaA binds to the origin of replication (oriC) to initiate formation of the DNA replication initiation complex once per cell cycle. Binds the DnaA box (a 9 base pair repeat at the origin) and separates the double-stranded (ds)DNA. Forms a right-handed helical filament on oriC DNA; dsDNA binds to the exterior of the filament while single-stranded (ss)DNA is stabiized in the filament's interior. The ATP-DnaA-oriC complex binds and stabilizes one strand of the AT-rich DNA unwinding element (DUE), permitting loading of DNA polymerase. After initiation quickly degrades to an ADP-DnaA complex that is not apt for DNA replication. Binds acidic phospholipids. This is Chromosomal replication initiator protein DnaA from Micrococcus luteus (strain ATCC 4698 / DSM 20030 / JCM 1464 / CCM 169 / CCUG 5858 / IAM 1056 / NBRC 3333 / NCIMB 9278 / NCTC 2665 / VKM Ac-2230) (Micrococcus lysodeikticus).